The following is a 296-amino-acid chain: MAKLRQCAIYGKGGIGKSTTTQNLVAALAESGKKVMIVGCDPKADSTRLILHSKAQTTVMHLAAEAGSVEDLELEDVLSVGFGGIKCVESGGPEPGVGCAGRGVITAINFLEEEGAYDEDLDFVFYDVLGDVVCGGFAMPIRENKAQEIYIVCSGEMMAMYAANNIAKGIVKYANSGGVRLAGLICNSRNTDREDELIMALAGRLGTTMIHFVPRDNAVQHAEIRRMTMVEYDPKHKQADEYRQLANKIVNNTNFVIPTPIEMEELEELLMEFGIMEAEDESIVGQTAAELAAAAA.

11 to 18 contacts ATP; it reads GKGGIGKS. Cysteine 99 lines the [4Fe-4S] cluster pocket. Arginine 102 is modified (ADP-ribosylarginine; by dinitrogenase reductase ADP-ribosyltransferase). Cysteine 134 is a [4Fe-4S] cluster binding site.

It belongs to the NifH/BchL/ChlL family. Homodimer. It depends on [4Fe-4S] cluster as a cofactor. Post-translationally, the reversible ADP-ribosylation of Arg-102 inactivates the nitrogenase reductase and regulates nitrogenase activity.

It carries out the reaction N2 + 8 reduced [2Fe-2S]-[ferredoxin] + 16 ATP + 16 H2O = H2 + 8 oxidized [2Fe-2S]-[ferredoxin] + 2 NH4(+) + 16 ADP + 16 phosphate + 6 H(+). Its function is as follows. The key enzymatic reactions in nitrogen fixation are catalyzed by the nitrogenase complex, which has 2 components: the iron protein and the molybdenum-iron protein. This Dechloromonas aromatica (strain RCB) protein is Nitrogenase iron protein.